The sequence spans 343 residues: Dihydroorotate dehydrogenase (quinone) (343 aa).

FMN-binding positions include 61–65 and threonine 85; that span reads AGLDK. Lysine 65 lines the substrate pocket. Residue 110-114 coordinates substrate; the sequence is NRMGF. Asparagine 138 and asparagine 171 together coordinate FMN. Asparagine 171 contacts substrate. Serine 174 functions as the Nucleophile in the catalytic mechanism. Asparagine 176 contributes to the substrate binding site. The FMN site is built by lysine 216 and threonine 244. 245-246 serves as a coordination point for substrate; that stretch reads NT. Residues glycine 267, glycine 296, and 317–318 contribute to the FMN site; that span reads YS.

Belongs to the dihydroorotate dehydrogenase family. Type 2 subfamily. As to quaternary structure, monomer. Requires FMN as cofactor.

Its subcellular location is the cell membrane. The catalysed reaction is (S)-dihydroorotate + a quinone = orotate + a quinol. Its pathway is pyrimidine metabolism; UMP biosynthesis via de novo pathway; orotate from (S)-dihydroorotate (quinone route): step 1/1. Functionally, catalyzes the conversion of dihydroorotate to orotate with quinone as electron acceptor. The polypeptide is Dihydroorotate dehydrogenase (quinone) (Pseudomonas savastanoi pv. phaseolicola (strain 1448A / Race 6) (Pseudomonas syringae pv. phaseolicola (strain 1448A / Race 6))).